The sequence spans 178 residues: 2-oxo-4-hydroxy-4-carboxy-5-ureidoimidazoline decarboxylase (178 aa).

The active-site Proton donor is the His67. Substrate is bound by residues Pro68, 84-88, and 119-123; these read SQREQ and FVLAA.

This sequence belongs to the OHCU decarboxylase family.

The protein resides in the peroxisome. The enzyme catalyses 5-hydroxy-2-oxo-4-ureido-2,5-dihydro-1H-imidazole-5-carboxylate + H(+) = (S)-allantoin + CO2. Its pathway is purine metabolism; urate degradation; (S)-allantoin from urate: step 3/3. In terms of biological role, catalyzes the stereoselective decarboxylation of 2-oxo-4-hydroxy-4-carboxy-5-ureidoimidazoline (OHCU) to (S)-allantoin. The chain is 2-oxo-4-hydroxy-4-carboxy-5-ureidoimidazoline decarboxylase (Urad) from Mus musculus (Mouse).